The following is a 362-amino-acid chain: Histidinol-phosphate aminotransferase 2 (362 aa).

Residue K222 is modified to N6-(pyridoxal phosphate)lysine.

The protein belongs to the class-II pyridoxal-phosphate-dependent aminotransferase family. Histidinol-phosphate aminotransferase subfamily. As to quaternary structure, homodimer. Requires pyridoxal 5'-phosphate as cofactor.

It catalyses the reaction L-histidinol phosphate + 2-oxoglutarate = 3-(imidazol-4-yl)-2-oxopropyl phosphate + L-glutamate. The protein operates within amino-acid biosynthesis; L-histidine biosynthesis; L-histidine from 5-phospho-alpha-D-ribose 1-diphosphate: step 7/9. In Carboxydothermus hydrogenoformans (strain ATCC BAA-161 / DSM 6008 / Z-2901), this protein is Histidinol-phosphate aminotransferase 2.